Consider the following 525-residue polypeptide: GMP synthase [glutamine-hydrolyzing] (525 aa).

In terms of domain architecture, Glutamine amidotransferase type-1 spans 9 to 207 (RILILDFGSQ…VRDICQCEAL (199 aa)). The Nucleophile role is filled by Cys-86. Catalysis depends on residues His-181 and Glu-183. The region spanning 208 to 400 (WTPAKIIDDA…LGLPYDMLYR (193 aa)) is the GMPS ATP-PPase domain. Position 235–241 (235–241 (SGGVDSS)) interacts with ATP.

Homodimer.

It catalyses the reaction XMP + L-glutamine + ATP + H2O = GMP + L-glutamate + AMP + diphosphate + 2 H(+). It functions in the pathway purine metabolism; GMP biosynthesis; GMP from XMP (L-Gln route): step 1/1. Catalyzes the synthesis of GMP from XMP. In Shigella sonnei (strain Ss046), this protein is GMP synthase [glutamine-hydrolyzing].